We begin with the raw amino-acid sequence, 269 residues long: Formamidopyrimidine-DNA glycosylase (269 aa).

Catalysis depends on Pro-2, which acts as the Schiff-base intermediate with DNA. Catalysis depends on Glu-3, which acts as the Proton donor. Lys-57 (proton donor; for beta-elimination activity) is an active-site residue. Residues His-90, Arg-109, and Lys-150 each coordinate DNA. The segment at 235–269 (QVYGRKGEPCRICGMPVVGTKHAQRATFYCRQCQK) adopts an FPG-type zinc-finger fold. Arg-259 (proton donor; for delta-elimination activity) is an active-site residue.

This sequence belongs to the FPG family. In terms of assembly, monomer. It depends on Zn(2+) as a cofactor.

It carries out the reaction Hydrolysis of DNA containing ring-opened 7-methylguanine residues, releasing 2,6-diamino-4-hydroxy-5-(N-methyl)formamidopyrimidine.. It catalyses the reaction 2'-deoxyribonucleotide-(2'-deoxyribose 5'-phosphate)-2'-deoxyribonucleotide-DNA = a 3'-end 2'-deoxyribonucleotide-(2,3-dehydro-2,3-deoxyribose 5'-phosphate)-DNA + a 5'-end 5'-phospho-2'-deoxyribonucleoside-DNA + H(+). Functionally, involved in base excision repair of DNA damaged by oxidation or by mutagenic agents. Acts as a DNA glycosylase that recognizes and removes damaged bases. Has a preference for oxidized purines, such as 7,8-dihydro-8-oxoguanine (8-oxoG). Has AP (apurinic/apyrimidinic) lyase activity and introduces nicks in the DNA strand. Cleaves the DNA backbone by beta-delta elimination to generate a single-strand break at the site of the removed base with both 3'- and 5'-phosphates. In Klebsiella pneumoniae subsp. pneumoniae (strain ATCC 700721 / MGH 78578), this protein is Formamidopyrimidine-DNA glycosylase.